The sequence spans 77 residues: NAD(P)H-quinone oxidoreductase subunit L (77 aa).

The next 2 membrane-spanning stretches (helical) occupy residues 12-32 and 47-67; these read LIAY…LLFY and LGIY…SPFL.

The protein belongs to the complex I NdhL subunit family. As to quaternary structure, NDH-1 can be composed of about 15 different subunits; different subcomplexes with different compositions have been identified which probably have different functions.

Its subcellular location is the cellular thylakoid membrane. It catalyses the reaction a plastoquinone + NADH + (n+1) H(+)(in) = a plastoquinol + NAD(+) + n H(+)(out). It carries out the reaction a plastoquinone + NADPH + (n+1) H(+)(in) = a plastoquinol + NADP(+) + n H(+)(out). In terms of biological role, NDH-1 shuttles electrons from an unknown electron donor, via FMN and iron-sulfur (Fe-S) centers, to quinones in the respiratory and/or the photosynthetic chain. The immediate electron acceptor for the enzyme in this species is believed to be plastoquinone. Couples the redox reaction to proton translocation, and thus conserves the redox energy in a proton gradient. Cyanobacterial NDH-1 also plays a role in inorganic carbon-concentration. The polypeptide is NAD(P)H-quinone oxidoreductase subunit L (Prochlorococcus marinus (strain MIT 9312)).